Consider the following 154-residue polypeptide: Myoglobin (154 aa).

The Globin domain maps to 2–148; that stretch reads GLSDGEWQLV…FRNDIAAKYK (147 aa). At Ser4 the chain carries Phosphoserine. His65 is a binding site for nitrite. His65 contacts O2. Thr68 is modified (phosphothreonine). Heme b is bound at residue His94.

This sequence belongs to the globin family. As to quaternary structure, monomeric.

It localises to the cytoplasm. The protein resides in the sarcoplasm. The catalysed reaction is Fe(III)-heme b-[protein] + nitric oxide + H2O = Fe(II)-heme b-[protein] + nitrite + 2 H(+). It carries out the reaction H2O2 + AH2 = A + 2 H2O. Monomeric heme protein which primary function is to store oxygen and facilitate its diffusion within muscle tissues. Reversibly binds oxygen through a pentacoordinated heme iron and enables its timely and efficient release as needed during periods of heightened demand. Depending on the oxidative conditions of tissues and cells, and in addition to its ability to bind oxygen, it also has a nitrite reductase activity whereby it regulates the production of bioactive nitric oxide. Under stress conditions, like hypoxia and anoxia, it also protects cells against reactive oxygen species thanks to its pseudoperoxidase activity. This is Myoglobin (MB) from Tupaia glis (Common tree shrew).